The following is a 453-amino-acid chain: Protein vestigial (453 aa).

Residues 145–279 (AAGHSLHSSH…GGGLAGSGQG (135 aa)) are disordered. The segment covering 151–177 (HSSHRTHAHSLAHAHTHPHSHTHTHTH) has biased composition (basic residues). The span at 178–193 (QTKEEDLIVPRSEAEA) shows a compositional bias: basic and acidic residues. Gly residues-rich tracts occupy residues 227–253 (HGGG…GGTG) and 267–278 (GSGGGGLAGSGQ). Residues 279 to 335 (GQAQYLSASCVVFTNYSGDTASQVDEHFSRALNYNNKDSKESSSPMSNRNFPPSFWN) form a ser-rich sd binding domain region.

In terms of assembly, the Ser-rich protein domain within the C-terminal region interacts with the C-terminus of sd to form a complex which acts as a selector for wing development. Interacts with Dhfr. Expressed in the developing wing primordia initially along the D/V wing boundary, and by the late third larval instar, maximal expression is seen in cells at the D/V wing disk boundary. Less expression is seen in cells located farther from this boundary.

The protein resides in the nucleus. In terms of biological role, involved in determining which thoracic imaginal disk cells will form wings and halteres, perhaps by interacting with other nuclear regulatory proteins. When in combination with scalloped (sd), it acts as a transcriptional activation complex that regulates gene expression in the wing. Binding to sd switches the DNA target selectivity of sd. Required and sufficient for cell proliferation at the dorsal/ventral (D/V) boundary of the wing imaginal disk. Also required for cell proliferation in the wing imaginal disk, mediated via activation of E2f. By interacting with Dhfr, may control genes involved in DNA replication. This is Protein vestigial (vg) from Drosophila melanogaster (Fruit fly).